Reading from the N-terminus, the 119-residue chain is Large ribosomal subunit protein bL20 (119 aa).

This sequence belongs to the bacterial ribosomal protein bL20 family.

Binds directly to 23S ribosomal RNA and is necessary for the in vitro assembly process of the 50S ribosomal subunit. It is not involved in the protein synthesizing functions of that subunit. The sequence is that of Large ribosomal subunit protein bL20 from Bordetella avium (strain 197N).